A 361-amino-acid polypeptide reads, in one-letter code: Chorismate synthase (361 aa).

NADP(+)-binding residues include Arg48 and Arg54. FMN is bound by residues 125-127 (RSS), 238-239 (NA), Gly278, 293-297 (KPTSS), and Arg319.

This sequence belongs to the chorismate synthase family. In terms of assembly, homotetramer. The cofactor is FMNH2.

It catalyses the reaction 5-O-(1-carboxyvinyl)-3-phosphoshikimate = chorismate + phosphate. It functions in the pathway metabolic intermediate biosynthesis; chorismate biosynthesis; chorismate from D-erythrose 4-phosphate and phosphoenolpyruvate: step 7/7. Functionally, catalyzes the anti-1,4-elimination of the C-3 phosphate and the C-6 proR hydrogen from 5-enolpyruvylshikimate-3-phosphate (EPSP) to yield chorismate, which is the branch point compound that serves as the starting substrate for the three terminal pathways of aromatic amino acid biosynthesis. This reaction introduces a second double bond into the aromatic ring system. In Klebsiella pneumoniae (strain 342), this protein is Chorismate synthase.